We begin with the raw amino-acid sequence, 279 residues long: 4-hydroxy-3-methylbut-2-enyl diphosphate reductase (279 aa).

Cys-12 provides a ligand contact to [4Fe-4S] cluster. (2E)-4-hydroxy-3-methylbut-2-enyl diphosphate-binding residues include His-40 and His-70. 2 residues coordinate dimethylallyl diphosphate: His-40 and His-70. Residues His-40 and His-70 each coordinate isopentenyl diphosphate. Cys-92 contributes to the [4Fe-4S] cluster binding site. A (2E)-4-hydroxy-3-methylbut-2-enyl diphosphate-binding site is contributed by His-119. Residue His-119 coordinates dimethylallyl diphosphate. His-119 provides a ligand contact to isopentenyl diphosphate. The active-site Proton donor is Glu-121. Residue Thr-151 participates in (2E)-4-hydroxy-3-methylbut-2-enyl diphosphate binding. Cys-181 contacts [4Fe-4S] cluster. The (2E)-4-hydroxy-3-methylbut-2-enyl diphosphate site is built by Ser-209, Ser-210, Asn-211, and Ser-251. 4 residues coordinate dimethylallyl diphosphate: Ser-209, Ser-210, Asn-211, and Ser-251. Positions 209, 210, 211, and 251 each coordinate isopentenyl diphosphate.

The protein belongs to the IspH family. The cofactor is [4Fe-4S] cluster.

The enzyme catalyses isopentenyl diphosphate + 2 oxidized [2Fe-2S]-[ferredoxin] + H2O = (2E)-4-hydroxy-3-methylbut-2-enyl diphosphate + 2 reduced [2Fe-2S]-[ferredoxin] + 2 H(+). It carries out the reaction dimethylallyl diphosphate + 2 oxidized [2Fe-2S]-[ferredoxin] + H2O = (2E)-4-hydroxy-3-methylbut-2-enyl diphosphate + 2 reduced [2Fe-2S]-[ferredoxin] + 2 H(+). The protein operates within isoprenoid biosynthesis; dimethylallyl diphosphate biosynthesis; dimethylallyl diphosphate from (2E)-4-hydroxy-3-methylbutenyl diphosphate: step 1/1. Its pathway is isoprenoid biosynthesis; isopentenyl diphosphate biosynthesis via DXP pathway; isopentenyl diphosphate from 1-deoxy-D-xylulose 5-phosphate: step 6/6. In terms of biological role, catalyzes the conversion of 1-hydroxy-2-methyl-2-(E)-butenyl 4-diphosphate (HMBPP) into a mixture of isopentenyl diphosphate (IPP) and dimethylallyl diphosphate (DMAPP). Acts in the terminal step of the DOXP/MEP pathway for isoprenoid precursor biosynthesis. This Thermotoga neapolitana (strain ATCC 49049 / DSM 4359 / NBRC 107923 / NS-E) protein is 4-hydroxy-3-methylbut-2-enyl diphosphate reductase.